The primary structure comprises 238 residues: Ubiquinone biosynthesis O-methyltransferase (238 aa).

S-adenosyl-L-methionine contacts are provided by arginine 39, glycine 59, aspartate 80, and methionine 124.

It belongs to the methyltransferase superfamily. UbiG/COQ3 family.

The enzyme catalyses a 3-demethylubiquinol + S-adenosyl-L-methionine = a ubiquinol + S-adenosyl-L-homocysteine + H(+). It carries out the reaction a 3-(all-trans-polyprenyl)benzene-1,2-diol + S-adenosyl-L-methionine = a 2-methoxy-6-(all-trans-polyprenyl)phenol + S-adenosyl-L-homocysteine + H(+). Its pathway is cofactor biosynthesis; ubiquinone biosynthesis. Its function is as follows. O-methyltransferase that catalyzes the 2 O-methylation steps in the ubiquinone biosynthetic pathway. The sequence is that of Ubiquinone biosynthesis O-methyltransferase from Aeromonas salmonicida (strain A449).